The sequence spans 545 residues: Thermosome subunit (545 aa).

This sequence belongs to the TCP-1 chaperonin family. In terms of assembly, forms an oligomeric complex of eight-membered rings.

In terms of biological role, molecular chaperone; binds unfolded polypeptides in vitro, and has a weak ATPase activity. The sequence is that of Thermosome subunit (ths) from Methanopyrus kandleri (strain AV19 / DSM 6324 / JCM 9639 / NBRC 100938).